A 227-amino-acid chain; its full sequence is Cytochrome c oxidase subunit 2 (227 aa).

Topologically, residues 1–14 (MAYPMQLGFQDATS) are mitochondrial intermembrane. A helical transmembrane segment spans residues 15 to 45 (PIMEELLHFHDHTLMIVFLISSLVLYIISLM). Topologically, residues 46–59 (LTTKLTHTSTMDAQ) are mitochondrial matrix. A helical membrane pass occupies residues 60–87 (EVETIWTILPAIILIMIALPSLRILYMM). Over 88 to 227 (DEINNPSLTV…YFEKWSASML (140 aa)) the chain is Mitochondrial intermembrane. 5 residues coordinate Cu cation: cysteine 196, glutamate 198, cysteine 200, histidine 204, and methionine 207. Glutamate 198 serves as a coordination point for Mg(2+). Tyrosine 218 bears the Phosphotyrosine mark.

Belongs to the cytochrome c oxidase subunit 2 family. In terms of assembly, component of the cytochrome c oxidase (complex IV, CIV), a multisubunit enzyme composed of 14 subunits. The complex is composed of a catalytic core of 3 subunits MT-CO1, MT-CO2 and MT-CO3, encoded in the mitochondrial DNA, and 11 supernumerary subunits COX4I, COX5A, COX5B, COX6A, COX6B, COX6C, COX7A, COX7B, COX7C, COX8 and NDUFA4, which are encoded in the nuclear genome. The complex exists as a monomer or a dimer and forms supercomplexes (SCs) in the inner mitochondrial membrane with NADH-ubiquinone oxidoreductase (complex I, CI) and ubiquinol-cytochrome c oxidoreductase (cytochrome b-c1 complex, complex III, CIII), resulting in different assemblies (supercomplex SCI(1)III(2)IV(1) and megacomplex MCI(2)III(2)IV(2)). Found in a complex with TMEM177, COA6, COX18, COX20, SCO1 and SCO2. Interacts with TMEM177 in a COX20-dependent manner. Interacts with COX20. Interacts with COX16. The cofactor is Cu cation.

It is found in the mitochondrion inner membrane. The enzyme catalyses 4 Fe(II)-[cytochrome c] + O2 + 8 H(+)(in) = 4 Fe(III)-[cytochrome c] + 2 H2O + 4 H(+)(out). Its function is as follows. Component of the cytochrome c oxidase, the last enzyme in the mitochondrial electron transport chain which drives oxidative phosphorylation. The respiratory chain contains 3 multisubunit complexes succinate dehydrogenase (complex II, CII), ubiquinol-cytochrome c oxidoreductase (cytochrome b-c1 complex, complex III, CIII) and cytochrome c oxidase (complex IV, CIV), that cooperate to transfer electrons derived from NADH and succinate to molecular oxygen, creating an electrochemical gradient over the inner membrane that drives transmembrane transport and the ATP synthase. Cytochrome c oxidase is the component of the respiratory chain that catalyzes the reduction of oxygen to water. Electrons originating from reduced cytochrome c in the intermembrane space (IMS) are transferred via the dinuclear copper A center (CU(A)) of subunit 2 and heme A of subunit 1 to the active site in subunit 1, a binuclear center (BNC) formed by heme A3 and copper B (CU(B)). The BNC reduces molecular oxygen to 2 water molecules using 4 electrons from cytochrome c in the IMS and 4 protons from the mitochondrial matrix. The chain is Cytochrome c oxidase subunit 2 (MT-CO2) from Ovis aries (Sheep).